The chain runs to 279 residues: MTTRRLMLVHAHPDDESLTTGGTIARYAAEGADVQLVTCTLGEEGEVIGDRWAQLAVDQADQLGGYRIGELSTALRHLGVDGPTFLGGAGRWRDSGMADTTPLHPRAFAGADLNEAVGALTALIDEHRPHVVVTYDPFGGYGHPDHIQAHTVTTAAVEKASWQVAKLYWTVIATSALETGLASITQLPPGCQPAPLDLIPTFADEKISAAIDVSGHREAKVAALRAHATQLTVSDDGSSMALSNLIALPIADIEHFVLVRGEPGVDTGWESDLFAGVEL.

The Zn(2+) site is built by histidine 12, aspartate 15, and histidine 146.

Belongs to the MshB deacetylase family. Zn(2+) is required as a cofactor.

The catalysed reaction is 1D-myo-inositol 2-acetamido-2-deoxy-alpha-D-glucopyranoside + H2O = 1D-myo-inositol 2-amino-2-deoxy-alpha-D-glucopyranoside + acetate. In terms of biological role, catalyzes the deacetylation of 1D-myo-inositol 2-acetamido-2-deoxy-alpha-D-glucopyranoside (GlcNAc-Ins) in the mycothiol biosynthesis pathway. The chain is 1D-myo-inositol 2-acetamido-2-deoxy-alpha-D-glucopyranoside deacetylase from Mycobacteroides abscessus (strain ATCC 19977 / DSM 44196 / CCUG 20993 / CIP 104536 / JCM 13569 / NCTC 13031 / TMC 1543 / L948) (Mycobacterium abscessus).